Consider the following 289-residue polypeptide: Heme oxygenase 1 (289 aa).

At 1–266 (MERPQLDSMS…SQISTSSSQT (266 aa)) the chain is on the cytoplasmic side. Residues Lys-18, His-25, Tyr-134, and Arg-183 each coordinate heme b. Residues 225 to 261 (HKDQSPSQTEFLRQRPASLVQDTTSAETPRGKSQIST) form a disordered region. Ser-229 and Ser-242 each carry phosphoserine. Residues 244–261 (VQDTTSAETPRGKSQIST) show a composition bias toward polar residues. The chain crosses the membrane as a helical; Anchor for type IV membrane protein span at residues 267-289 (PLLRWVLTLSFLLATVAVGIYAM).

It belongs to the heme oxygenase family. As to quaternary structure, homodimer and higher order homooligomer. Oligomerization is crucial for its stability and function in the endoplasmic reticulum. Interacts with FLVCR2; this interaction is potentiated in the presence of heme. A soluble form arises by proteolytic removal of the membrane anchor.

It localises to the endoplasmic reticulum membrane. It catalyses the reaction heme b + 3 reduced [NADPH--hemoprotein reductase] + 3 O2 = biliverdin IXalpha + CO + Fe(2+) + 3 oxidized [NADPH--hemoprotein reductase] + 3 H2O + H(+). Inhibited by metalloporphyrins such as Sn- and Zn-protoporphyrins. Its function is as follows. Catalyzes the oxidative cleavage of heme at the alpha-methene bridge carbon, released as carbon monoxide (CO), to generate biliverdin IXalpha, while releasing the central heme iron chelate as ferrous iron. Affords protection against programmed cell death and this cytoprotective effect relies on its ability to catabolize free heme and prevent it from sensitizing cells to undergo apoptosis. Catalyzes the oxidative cleavage of heme at the alpha-methene bridge carbon, released as carbon monoxide (CO), to generate biliverdin IXalpha, while releasing the central heme iron chelate as ferrous iron. The polypeptide is Heme oxygenase 1 (Hmox1) (Rattus norvegicus (Rat)).